The primary structure comprises 163 residues: Photosystem II extrinsic protein V (163 aa).

A signal peptide spans 1–26 (MFKTYSKSFACILFCIFNIFVVSASA). Heme c contacts are provided by Cys63, Cys66, His67, and Met130.

The protein belongs to the cytochrome c family. PsbV subfamily. As to quaternary structure, PSII is composed of 1 copy each of membrane proteins PsbA, PsbB, PsbC, PsbD, PsbE, PsbF, PsbH, PsbI, PsbJ, PsbK, PsbL, PsbM, PsbT, PsbY, PsbZ, Psb30/Ycf12, at least 3 peripheral proteins of the oxygen-evolving complex and a large number of cofactors. It forms dimeric complexes. Heme c is required as a cofactor.

It is found in the plastid. The protein localises to the chloroplast thylakoid membrane. In terms of biological role, one of the extrinsic, lumenal subunits of photosystem II (PSII). PSII is a light-driven water plastoquinone oxidoreductase, using light energy to abstract electrons from H(2)O, generating a proton gradient subsequently used for ATP formation. The extrinsic proteins stabilize the structure of photosystem II oxygen-evolving complex (OEC), the ion environment of oxygen evolution and protect the OEC against heat-induced inactivation. This is Photosystem II extrinsic protein V from Thalassiosira pseudonana (Marine diatom).